We begin with the raw amino-acid sequence, 170 residues long: MFEQEDEWISKTQMKKQMNGLQDLGMELTKLSNDTLKKIGLDEDLYEAVVTYKKITSNGALKRQAQFIGRLMRDTDPAPIEAFLAKLRGDDAAHNAFLQRVEQARVRLLADDGALTQFMSDFPHADAGKLRTLIRNTKKEQEQNKPPKNFRALFQELKTVMESQGGTGEA.

This sequence belongs to the DarP family.

The protein resides in the cytoplasm. Its function is as follows. Member of a network of 50S ribosomal subunit biogenesis factors which assembles along the 30S-50S interface, preventing incorrect 23S rRNA structures from forming. Promotes peptidyl transferase center (PTC) maturation. This Neisseria meningitidis serogroup A / serotype 4A (strain DSM 15465 / Z2491) protein is Dual-action ribosomal maturation protein DarP.